The sequence spans 2595 residues: Glucosylceramide transporter ABCA12 (2595 aa).

The chain crosses the membrane as a helical span at residues 23–43; it reads PLWTLVLILWPVIIFIILAIT. Residues Asn-156, Asn-174, Asn-214, Asn-275, Asn-333, Asn-367, Asn-383, Asn-412, Asn-435, Asn-528, Asn-543, Asn-577, Asn-608, Asn-623, Asn-648, Asn-752, Asn-826, Asn-920, and Asn-963 are each glycosylated (N-linked (GlcNAc...) asparagine). 3 helical membrane-spanning segments follow: residues 1065 to 1085, 1112 to 1132, and 1145 to 1165; these read VSYSLPIVLMVAWVVFIAAFV, FAWLIESVGFLLVTIVILIII, and FILFLYFSDYSFSVIAMSYLI. Asn-1170 carries N-linked (GlcNAc...) asparagine glycosylation. 3 helical membrane passes run 1174-1194, 1200-1220, and 1250-1270; these read IAALIGSLIYIIAFFPFIVLV, LSYVLKVFMSLLSPTAFSYAS, and FGWLCCLILADSFIYFLIAWY. The ABC transporter 1 domain occupies 1346–1577; that stretch reads VALHGVTKIY…FGDGYHLTLT (232 aa). Position 1378–1385 (1378–1385) interacts with ATP; sequence GPNGAGKT. 3 N-linked (GlcNAc...) asparagine glycosylation sites follow: Asn-1524, Asn-1663, and Asn-1704. Residues 1747–1767 form a helical membrane-spanning segment; the sequence is LIAQVILPIVFVTTAMGLGTL. N-linked (GlcNAc...) asparagine glycosylation is found at Asn-1769, Asn-1819, Asn-1835, Asn-1876, Asn-1921, and Asn-1952. A run of 4 helical transmembrane segments spans residues 1979–1999, 2035–2055, 2072–2092, and 2103–2123; these read ATISSLIDILVALSILMGYSV, FIYDMVFYLVPVAFSIGIIAI, LLLLLFGYATFSWMYLLAGLF, and VCVNLFFGINSIVSLSVVYFL. A glycan (N-linked (GlcNAc...) asparagine) is linked at Asn-2178. The helical transmembrane segment at 2187 to 2207 threads the bilayer; it reads GAMFVALVSQGTMFFSLRLLI. 2 N-linked (GlcNAc...) asparagine glycosylation sites follow: Asn-2208 and Asn-2223. Residues 2254-2489 enclose the ABC transporter 2 domain; sequence VQLYCLTKTY…FGRGFTVKVH (236 aa). Residues 2270–2290 form a helical membrane-spanning segment; it reads IIAVNNISIGIPAGECFGLLG. 2290-2297 provides a ligand contact to ATP; the sequence is GVNGAGKT. N-linked (GlcNAc...) asparagine glycosylation is found at Asn-2318, Asn-2542, and Asn-2547. The interval 2571–2595 is disordered; the sequence is SYETADTSSQGSTISVDSQDDQMES. Residues 2574-2587 show a composition bias toward polar residues; sequence TADTSSQGSTISVD.

It belongs to the ABC transporter superfamily. ABCA family. In terms of assembly, interacts with NR1H2 and ABCA1; this interaction is required for ABCA1 localization to the cell surface and is necessary for its normal activity and stability. In terms of tissue distribution, mainly expressed in the stomach, placenta, testis and fetal brain. Expressed in the upper epidermal layers, mainly the granular layers, of skin. Expressed throughout the normal interfollicular epidermis with prominent expression in the stratum granulosum. Expressed in alpha and beta cells of pancreatic islets.

It is found in the cytoplasmic vesicle. The protein localises to the secretory vesicle membrane. Its subcellular location is the golgi apparatus membrane. The catalysed reaction is ATP + H2O + phospholipidSide 1 = ADP + phosphate + phospholipidSide 2.. It carries out the reaction a beta-D-glucosylceramide(in) + ATP + H2O = a beta-D-glucosylceramide(out) + ADP + phosphate + H(+). In terms of biological role, transports lipids such as glucosylceramides from the outer to the inner leaflet of lamellar granules (LGs) membrane, whereby the lipids are finally transported to the keratinocyte periphery via the trans-Golgi network and LGs and released to the apical surface of the granular keratinocytes to form lipid lamellae in the stratum corneum of the epidermis, which is essential for skin barrier function. In the meantime, participates in the transport of the lamellar granules-associated proteolytic enzymes, in turn regulates desquamation and keratinocyte differentiation. Furthermore, is essential for the regulation of cellular cholesterol homeostasis by regulating ABCA1-dependent cholesterol efflux from macrophages through interaction with NR1H2 and ABCA1. Plays pleiotropic roles in regulating glucose stimulated insulin secretion from beta cells, regulating the morphology and fusion of insulin granules, lipid raft abundance and the actin cytoskeleton. Also involved in lung surfactant biogenesis. In Homo sapiens (Human), this protein is Glucosylceramide transporter ABCA12.